Consider the following 1222-residue polypeptide: ATP-dependent helicase/nuclease subunit A (1222 aa).

The UvrD-like helicase ATP-binding domain maps to 27–483 (HLQENERCRD…RDYQKKPEQG (457 aa)). 48 to 55 (AIYTSGQN) is an ATP binding site. Residues 512–798 (ESVGDVLYDE…ADVEVATPKQ (287 aa)) form the UvrD-like helicase C-terminal domain.

It belongs to the helicase family. AddA subfamily. Heterodimer of AddA and AddB/RexB. The cofactor is Mg(2+).

The enzyme catalyses Couples ATP hydrolysis with the unwinding of duplex DNA by translocating in the 3'-5' direction.. The catalysed reaction is ATP + H2O = ADP + phosphate + H(+). In terms of biological role, the heterodimer acts as both an ATP-dependent DNA helicase and an ATP-dependent, dual-direction single-stranded exonuclease. Recognizes the chi site generating a DNA molecule suitable for the initiation of homologous recombination. The AddA nuclease domain is required for chi fragment generation; this subunit has the helicase and 3' -&gt; 5' nuclease activities. This Streptococcus pyogenes serotype M1 protein is ATP-dependent helicase/nuclease subunit A.